The sequence spans 155 residues: Probable tellurium resistance transcriptional regulator TerW (155 aa).

Functionally, involved in tellurite resistance. TerW binds specifically to the potential promoter region of the terZABCDE operon and probably regulates expression of the genes. The polypeptide is Probable tellurium resistance transcriptional regulator TerW (Escherichia coli).